Reading from the N-terminus, the 58-residue chain is Ribosome modulation factor (58 aa).

It belongs to the ribosome modulation factor family.

Its subcellular location is the cytoplasm. Its function is as follows. During stationary phase, converts 70S ribosomes to an inactive dimeric form (100S ribosomes). This chain is Ribosome modulation factor, found in Tolumonas auensis (strain DSM 9187 / NBRC 110442 / TA 4).